A 436-amino-acid chain; its full sequence is Elongation factor 1-alpha (436 aa).

Residues 8–232 (KPHLNMIVTG…DDFKMAEKPV (225 aa)) form the tr-type G domain. The interval 17-24 (GHIDNGKS) is G1. 17–24 (GHIDNGKS) contributes to the GTP binding site. Ser-24 is a Mg(2+) binding site. The interval 74–78 (GITID) is G2. The tract at residues 95-98 (DAPG) is G3. GTP-binding positions include 95–99 (DAPGH) and 157–160 (NKMD). Residues 157-160 (NKMD) form a G4 region. Residues 196–198 (SGW) are G5.

The protein belongs to the TRAFAC class translation factor GTPase superfamily. Classic translation factor GTPase family. EF-Tu/EF-1A subfamily.

The protein resides in the cytoplasm. The enzyme catalyses GTP + H2O = GDP + phosphate + H(+). Functionally, GTP hydrolase that promotes the GTP-dependent binding of aminoacyl-tRNA to the A-site of ribosomes during protein biosynthesis. The polypeptide is Elongation factor 1-alpha (Cenarchaeum symbiosum (strain A)).